The following is a 365-amino-acid chain: uncharacterized protein (365 aa).

This is an uncharacterized protein from Archaeoglobus fulgidus (strain ATCC 49558 / DSM 4304 / JCM 9628 / NBRC 100126 / VC-16).